Here is a 677-residue protein sequence, read N- to C-terminus: MSEVLRRANNALSSVKQYQSLLNHFAATQSISKTKALHCHVITGGRVSGHILSTLSVTYALCGHITYARKLFEEMPQSSLLSYNIVIRMYVREGLYHDAISVFIRMVSEGVKCVPDGYTYPFVAKAAGELKSMKLGLVVHGRILRSWFGRDKYVQNALLAMYMNFGKVEMARDVFDVMKNRDVISWNTMISGYYRNGYMNDALMMFDWMVNESVDLDHATIVSMLPVCGHLKDLEMGRNVHKLVEEKRLGDKIEVKNALVNMYLKCGRMDEARFVFDRMERRDVITWTCMINGYTEDGDVENALELCRLMQFEGVRPNAVTIASLVSVCGDALKVNDGKCLHGWAVRQQVYSDIIIETSLISMYAKCKRVDLCFRVFSGASKYHTGPWSAIIAGCVQNELVSDALGLFKRMRREDVEPNIATLNSLLPAYAALADLRQAMNIHCYLTKTGFMSSLDAATGLVHVYSKCGTLESAHKIFNGIQEKHKSKDVVLWGALISGYGMHGDGHNALQVFMEMVRSGVTPNEITFTSALNACSHSGLVEEGLTLFRFMLEHYKTLARSNHYTCIVDLLGRAGRLDEAYNLITTIPFEPTSTVWGALLAACVTHENVQLGEMAANKLFELEPENTGNYVLLANIYAALGRWKDMEKVRSMMENVGLRKKPGHSTIEIRSNSVDTR.

PPR repeat units follow at residues 48 to 78 (SGHI…MPQS), 79 to 113 (SLLS…GVKC), 116 to 146 (DGYT…ILRS), 151 to 181 (DKYV…MKNR), 182 to 216 (DVIS…SVDL), 217 to 251 (DHAT…RLGD), 252 to 282 (KIEV…MERR), 283 to 317 (DVIT…GVRP), 318 to 352 (NAVT…QVYS), 353 to 383 (DIII…ASKY), 384 to 418 (HTGP…DVEP), 419 to 453 (NIAT…GFMS), 454 to 488 (SLDA…HKSK), 489 to 523 (DVVL…GVTP), 524 to 554 (NEIT…MLEH), and 560 to 590 (RSNH…IPFE). The segment at 595-670 (VWGALLAACV…KPGHSTIEIR (76 aa)) is type E motif.

The protein belongs to the PPR family. PCMP-E subfamily.

This Arabidopsis thaliana (Mouse-ear cress) protein is Pentatricopeptide repeat-containing protein At5g39350 (PCMP-E16).